The following is a 660-amino-acid chain: Macrolide export ATP-binding/permease protein MacB (660 aa).

One can recognise an ABC transporter domain in the interval 10-248 (LVLENIVRKF…TDSQALYGKQ (239 aa)). 46–53 (GASGSGKS) is a binding site for ATP. 4 helical membrane passes run 285–305 (FLTMLGVIIGIGAIIAMVALG), 532–552 (ILTLLVSSIAAISLIVGGIGV), 593–613 (VIGGGLGILFGMSIGGLFLLF), and 625–645 (SIILSLTFSTLIGVCFGFSPA).

This sequence belongs to the ABC transporter superfamily. Macrolide exporter (TC 3.A.1.122) family. Homodimer.

Its subcellular location is the cell inner membrane. Its function is as follows. Non-canonical ABC transporter that contains transmembrane domains (TMD), which form a pore in the inner membrane, and an ATP-binding domain (NBD), which is responsible for energy generation. Confers resistance against macrolides. This Bartonella henselae (strain ATCC 49882 / DSM 28221 / CCUG 30454 / Houston 1) (Rochalimaea henselae) protein is Macrolide export ATP-binding/permease protein MacB.